The chain runs to 599 residues: BICD family-like cargo adapter 1 (599 aa).

A disordered region spans residues 1-27 (MELPISFLSDSSRPAASSERGDQAALG). The short motif at 76 to 80 (AARLG) is the CC1 box element. Residues 80–341 (GKALLERNQD…WEAHCQVRSL (262 aa)) are a coiled coil. Positions 352–375 (DSAVSTDSSMDESSETSSAKDVPA) are disordered. Residues 405-536 (EDDGLEEQIK…LEAWQDDMHR (132 aa)) adopt a coiled-coil conformation.

It belongs to the BICDR family. As to quaternary structure, part of a tripartite complex with dynein and dynactin, acts an adapter linking the dynein motor complex and dynactin. Interacts with KIF1C. Interacts with RAB6A and RAB6B; interaction is specific to Rab6.

It localises to the cytoplasm. Its subcellular location is the cytoskeleton. The protein localises to the microtubule organizing center. It is found in the centrosome. Its function is as follows. Acts as an adapter protein linking the dynein motor complex to various cargos and converts dynein from a non-processive to a highly processive motor in the presence of dynactin. Facilitates the interaction between dynein and dynactin and activates dynein processivity (the ability to move along a microtubule for a long distance without falling off the track). Predominantly recruits 2 dyneins, which increases both the force and speed of the microtubule motor. Component of secretory vesicle machinery in developing neurons that acts as a regulator of neurite outgrowth. Regulates the secretory vesicle transport by controlling the accumulation of Rab6-containing secretory vesicles in the pericentrosomal region restricting anterograde secretory transport during the early phase of neuronal differentiation, thereby inhibiting neuritogenesis. The chain is BICD family-like cargo adapter 1 (bicdl1) from Xenopus tropicalis (Western clawed frog).